The sequence spans 378 residues: 1-acyl-sn-glycerol-3-phosphate acyltransferase delta (378 aa).

The chain crosses the membrane as a helical span at residues Phe-11 to Ile-31. The short motif at His-96 to Asp-101 is the HXXXXD motif element. 3 helical membrane passes run Glu-125–Thr-145, Trp-311–Ser-331, and Leu-338–Val-358.

Belongs to the 1-acyl-sn-glycerol-3-phosphate acyltransferase family.

The protein localises to the endoplasmic reticulum membrane. It carries out the reaction a 1-acyl-sn-glycero-3-phosphate + an acyl-CoA = a 1,2-diacyl-sn-glycero-3-phosphate + CoA. The enzyme catalyses (4Z,7Z,10Z,13Z,16Z,19Z)-docosahexaenoyl-CoA + 1-hexadecanoyl-sn-glycero-3-phosphate = 1-hexadecanoyl-2-(4Z,7Z,10Z,13Z,16Z,19Z-docosahexaenoyl)-sn-glycero-3-phosphate + CoA. The catalysed reaction is 1-octadecanoyl-sn-glycero-3-phosphate + (9Z,12Z)-octadecadienoyl-CoA = 1-octadecanoyl-2-(9Z,12Z-octadecadienoyl)-sn-glycero-3-phosphate + CoA. It catalyses the reaction 1-octadecanoyl-sn-glycero-3-phosphate + (4Z,7Z,10Z,13Z,16Z,19Z)-docosahexaenoyl-CoA = 1-octadecanoyl-2-(4Z,7Z,10Z,13Z,16Z,19Z-docosahexaenoyl)-sn-glycero-3-phosphate + CoA. It carries out the reaction (4Z,7Z,10Z,13Z,16Z,19Z)-docosahexaenoyl-CoA + 1-(9Z-octadecenoyl)-sn-glycero-3-phosphate = 1-(9Z-octadecenoyl)-2-(4Z,7Z,10Z,13Z,16Z,19Z-docosahexaenoyl)-sn-glycero-3-phosphate + CoA. The protein operates within phospholipid metabolism; CDP-diacylglycerol biosynthesis; CDP-diacylglycerol from sn-glycerol 3-phosphate: step 2/3. Converts 1-acyl-sn-glycerol-3-phosphate (lysophosphatidic acid or LPA) into 1,2-diacyl-sn-glycerol-3-phosphate (phosphatidic acid or PA) by incorporating an acyl moiety at the sn-2 position of the glycerol backbone. Exhibits high acyl-CoA specificity for polyunsaturated fatty acyl-CoA, especially docosahexaenoyl-CoA (22:6-CoA, DHA-CoA). The sequence is that of 1-acyl-sn-glycerol-3-phosphate acyltransferase delta (Agpat4) from Rattus norvegicus (Rat).